Here is a 242-residue protein sequence, read N- to C-terminus: Host range factor p28 (242 aa).

Residues 21-131 (YIDEPNDIRL…QSILRGLVNW (111 aa)) form the KilA-N domain. An RING-type zinc finger spans residues 173 to 226 (CGICYEVVYSKRLENDRYFGLLDSCNHIFCITCINIWHRTRRETGASDNCPICR).

Belongs to the orthopoxvirus OPG021 family.

It is found in the host cytoplasm. It catalyses the reaction S-ubiquitinyl-[E2 ubiquitin-conjugating enzyme]-L-cysteine + [acceptor protein]-L-lysine = [E2 ubiquitin-conjugating enzyme]-L-cysteine + N(6)-ubiquitinyl-[acceptor protein]-L-lysine.. Its function is as follows. RING-finger E3 ubiquitin ligase which catalyzes the formation of both 'Lys-48'- and 'Lys-63'-linked polyubiquitin chains. Plays an important role in virulence by acting as an anti-apoptotic factor. The protein is Host range factor p28 (OPG021) of Cowpox virus (strain Brighton Red) (CPV).